Here is a 518-residue protein sequence, read N- to C-terminus: DNA-binding protein D-ETS-4 (518 aa).

2 disordered regions span residues 74-113 (SQPIQQQQQPTAPYTNPSSHQLIPPPAYPHSAYPSPQSSP) and 152-172 (LPPSPPESNCETPSPRSSCGE). The segment covering 84-94 (TAPYTNPSSHQ) has biased composition (polar residues). Low complexity predominate over residues 102 to 113 (PHSAYPSPQSSP). Positions 158–171 (ESNCETPSPRSSCG) are enriched in polar residues. Residues 258–344 (HAKREADAIC…AQLEIWKMAY (87 aa)) enclose the PNT domain. The disordered stretch occupies residues 393–426 (APLNGSTTSPPATNASNGGTATVKRPNGGRTGGG). Positions 396-412 (NGSTTSPPATNASNGGT) are enriched in polar residues. Residues 430–513 (IHLWQFLKEL…RSQRLVYQFC (84 aa)) constitute a DNA-binding region (ETS).

The protein belongs to the ETS family. In terms of tissue distribution, transient high expression in pole cells during embryonic stages 8-11.

The protein localises to the nucleus. In terms of biological role, may have a role in germline development. This is DNA-binding protein D-ETS-4 (Ets98B) from Drosophila melanogaster (Fruit fly).